We begin with the raw amino-acid sequence, 181 residues long: Large ribosomal subunit protein uL6 (181 aa).

Belongs to the universal ribosomal protein uL6 family. As to quaternary structure, part of the 50S ribosomal subunit.

In terms of biological role, this protein binds to the 23S rRNA, and is important in its secondary structure. It is located near the subunit interface in the base of the L7/L12 stalk, and near the tRNA binding site of the peptidyltransferase center. In Phytoplasma mali (strain AT), this protein is Large ribosomal subunit protein uL6.